We begin with the raw amino-acid sequence, 72 residues long: UPF0352 protein Patl_3379 (72 aa).

The protein belongs to the UPF0352 family.

The sequence is that of UPF0352 protein Patl_3379 from Pseudoalteromonas atlantica (strain T6c / ATCC BAA-1087).